Reading from the N-terminus, the 417-residue chain is Monooxygenase cfoF (417 aa).

FAD is bound by residues 45–48 (DRDK), arginine 126, and aspartate 327. Over residues 389–399 (AHTTQLDRDQF) the composition is skewed to basic and acidic residues. A disordered region spans residues 389–417 (AHTTQLDRDQFTDGSGANDFLVGQQHSDK).

This sequence belongs to the aromatic-ring hydroxylase family. KMO subfamily. FAD serves as cofactor.

It participates in secondary metabolite biosynthesis; flavonoid biosynthesis. Functionally, monooxygenase; part of the gene cluster that mediates the biosynthesis of chlorflavonin, a fungal flavonoid with acetolactate synthase inhibitory activity. Within the pathway, cfoF is responsible for the hydroxylation of the flavonoid skeleton at position C3. The pathway begins with the PKS-NRPS hybrid synthetase cfoA that uses benzoic acid or p-hydroxybenzoic acid as a starter unit with four rounds of chain elongation using malonyl-CoA to form the chalcone skeleton. Then, a new type of chalcone isomerase, cfoK, catalyzes the conversion of the chalcone into a flavanone by a histidine-mediated oxa-Michael addition mechanism. The desaturation of flavanone to flavone is catalyzed by a new type of flavone synthase, the flavin mononucleotide (FMN)-dependent oxidoreductase cfoJ. Monooxygenases cfoF, cfoG, and P450 cfoH are responsible for the hydroxylation of the flavonoid skeleton at sites C3, C8, and C2', respectively. Like cfoF, the dehydratase cfoI plays also a role in the hydroxylation of position C3. Methyltransferases cfoB, cfoC, and cfoD then catalyze the methylation of C7-OH, C8-OH, and C3-OH, respectively. Finally, the monooxygenase cfoE is responsible for the chlorination of flavonoid at position C3'. In Aspergillus candidus, this protein is Monooxygenase cfoF.